The sequence spans 437 residues: MTYLILLGASICLFPFWEVTMLTLAFIIPMSLTYLNINFTFSFSSELIWLTPIGTALIFLTLMVTLLVLIGTYNIKNYKYIGCLSSLNLVLMMAFCVCDFLTFYVMFEVSLIPTLLLILLWGYQPERMQAGFYLMLYTVTASLPLLLLLLYLYYTVGSLNFYIIMVYYSFNNNPLMLVGLMMAFLVKLPIYTCHLWLPKAHVEAPLGGSMVLAGVLLKLGGYGLYMLINFIISKSSSLVISVIITLSLWGAVIASIICIQQVDIKALVAYSSVAHMSLVSAGILMMSNWSYTCAKMTMIAHGYTSSALFVLANLSYLKIKSRSLMFMKGLLAIFPAMAFYWFLFSCMNMAAPPTLNFIGELLIIPSMYIASYMLLILMCIIMFISAGYSLYMYMTVNHGELGLYITPSIQLKNVDYHVLTAHLLPTFILLIPQLFSV.

Transmembrane regions (helical) follow at residues 8–28, 50–70, 78–98, 100–120, 132–152, 177–197, 212–232, 239–259, 266–286, 297–317, 324–344, 361–381, and 417–437; these read GASI…AFII, LTPI…LVLI, YKYI…FCVC, FLTF…LILL, FYLM…LLYL, LVGL…HLWL, LAGV…NFII, VISV…IICI, ALVA…ILMM, TMIA…LSYL, LMFM…WFLF, LLII…MCII, and HVLT…LFSV.

Belongs to the complex I subunit 4 family.

Its subcellular location is the mitochondrion membrane. The enzyme catalyses a ubiquinone + NADH + 5 H(+)(in) = a ubiquinol + NAD(+) + 4 H(+)(out). In terms of biological role, core subunit of the mitochondrial membrane respiratory chain NADH dehydrogenase (Complex I) that is believed to belong to the minimal assembly required for catalysis. Complex I functions in the transfer of electrons from NADH to the respiratory chain. The immediate electron acceptor for the enzyme is believed to be ubiquinone. In Albinaria caerulea (Land snail), this protein is NADH-ubiquinone oxidoreductase chain 4 (ND4).